The sequence spans 361 residues: Phospho-N-acetylmuramoyl-pentapeptide-transferase (361 aa).

10 consecutive transmembrane segments (helical) span residues 28–48, 73–93, 98–118, 132–152, 168–188, 199–219, 235–255, 263–283, 288–308, and 338–358; these read LAILTSFFFTFIIAPPCIRWL, TMGGIIITASVLVAVLMWGNL, MWIMIISFLGFGLIGFIDDYL, YKLFAQLLLASSVTLFLYFNP, WLIDLGIFYLPFAIFVIVGSS, GLAAGLVGIASIVNAVLLYIS, GTGELAVFCGAMLGACLGFLW, VFMGDVGSLSLGGALGSLAVI, IVLALVGGIFVVEALSVILQV, and KVIVRFWIIGIILALLSLLTL.

The protein belongs to the glycosyltransferase 4 family. MraY subfamily. It depends on Mg(2+) as a cofactor.

It localises to the cell inner membrane. It catalyses the reaction UDP-N-acetyl-alpha-D-muramoyl-L-alanyl-gamma-D-glutamyl-meso-2,6-diaminopimeloyl-D-alanyl-D-alanine + di-trans,octa-cis-undecaprenyl phosphate = di-trans,octa-cis-undecaprenyl diphospho-N-acetyl-alpha-D-muramoyl-L-alanyl-D-glutamyl-meso-2,6-diaminopimeloyl-D-alanyl-D-alanine + UMP. It functions in the pathway cell wall biogenesis; peptidoglycan biosynthesis. Functionally, catalyzes the initial step of the lipid cycle reactions in the biosynthesis of the cell wall peptidoglycan: transfers peptidoglycan precursor phospho-MurNAc-pentapeptide from UDP-MurNAc-pentapeptide onto the lipid carrier undecaprenyl phosphate, yielding undecaprenyl-pyrophosphoryl-MurNAc-pentapeptide, known as lipid I. This Thermodesulfovibrio yellowstonii (strain ATCC 51303 / DSM 11347 / YP87) protein is Phospho-N-acetylmuramoyl-pentapeptide-transferase.